A 278-amino-acid polypeptide reads, in one-letter code: Ras-related protein Rab-40B (278 aa).

Residues S23, G26, and K27 each contribute to the GTP site. Positions 41 to 49 (SPYGHPAGI) are switch-I. Mg(2+) is bound at residue D69. Residues G72, N126, and R127 each coordinate GTP. The switch-II stretch occupies residues 72–88 (GQGRFCTIFRSYSRGAQ). In terms of domain architecture, SOCS box spans 175-228 (LLRHGMDRLWRPSKVLSLQELCCRAVVSCTPGHLVDKLPLPVALRSHLKSFSMA). Residues 245-278 (ANSSHKRNSFRKVRTIRPPQSPPRNCARNSCKIS) are disordered. The segment covering 248-259 (SHKRNSFRKVRT) has biased composition (basic residues). A lipid anchor (S-palmitoyl cysteine) is attached at C270. Residue C275 is the site of S-geranylgeranyl cysteine attachment.

This sequence belongs to the small GTPase superfamily. Rab family. As to quaternary structure, component of the cullin-5-RING E3 ubiquitin-protein ligase complex (ECS(RAB40B) complex) composed of CUL5, Elongin BC (ELOB and ELOC), RNF7/RBX2 and RAB40B; RAB40B interaction with ECS complex is GTP-independent. Binds (GTP-bound) LIMA1; interaction promotes LIMA1 subcellular localization in lamellipodia during cell migration. Interacts (GTP-bound) with TKS5/SH3PXD2A (via PX domain); interaction promotes invadopodia-mediated extracellular matrix degradation. The cofactor is Mg(2+).

It is found in the cell membrane. It localises to the cytoplasm. The protein resides in the cytosol. The protein localises to the cell projection. Its subcellular location is the lamellipodium membrane. It is found in the ruffle. The catalysed reaction is GTP + H2O = GDP + phosphate + H(+). Its pathway is protein modification; protein ubiquitination. Regulated by guanine nucleotide exchange factors (GEFs) which promote the exchange of bound GDP for free GTP. Regulated by GTPase activating proteins (GAPs) which increase the GTP hydrolysis activity. Inhibited by GDP dissociation inhibitors (GDIs). Its function is as follows. RAB40B small GTPase acts as substrate-recognition components of the ECS(RAB40B) E3 ubiquitin ligase complex which mediates the ubiquitination of target proteins. The Rab40 subfamily belongs to the Rab family that are key regulators of intracellular membrane trafficking, from the formation of transport vesicles to their fusion with membranes. Rabs cycle between an inactive GDP-bound form and an active GTP-bound form that is able to recruit to membranes different sets of downstream effectors directly responsible for vesicle formation, movement, tethering and fusion. As part of the ECS(RAB40B) complex, GTP-bound RAB40B promotes LIMA1/EPLIN ubiquitination and degradation, thereby regulating leading-edge actin dynamics during cell migration. As part of the ECS(RAB40B) complex, GTP-bound RAB40B also ubiquitinates RAP2A GTPase which promotes its localization to lamellipodia and activation to drive cell migration. The ECS(RAB40B) complex does not mediate canonical ubiquitin-dependent degradation of RAP2. RAB40B also binds TKS5/SH3PXD2A effector independently from ECS complex to promote invadopodia-mediated extracellular matrix degradation. This chain is Ras-related protein Rab-40B, found in Mus musculus (Mouse).